The following is a 692-amino-acid chain: Elongation factor G (692 aa).

The tr-type G domain maps to 8 to 283 (EDYRNFGIMA…AVVDYLPSPL (276 aa)). GTP-binding positions include 17 to 24 (AHIDAGKT), 81 to 85 (DTPGH), and 135 to 138 (NKMD).

This sequence belongs to the TRAFAC class translation factor GTPase superfamily. Classic translation factor GTPase family. EF-G/EF-2 subfamily.

Its subcellular location is the cytoplasm. Catalyzes the GTP-dependent ribosomal translocation step during translation elongation. During this step, the ribosome changes from the pre-translocational (PRE) to the post-translocational (POST) state as the newly formed A-site-bound peptidyl-tRNA and P-site-bound deacylated tRNA move to the P and E sites, respectively. Catalyzes the coordinated movement of the two tRNA molecules, the mRNA and conformational changes in the ribosome. The polypeptide is Elongation factor G (Caulobacter sp. (strain K31)).